A 215-amino-acid polypeptide reads, in one-letter code: Kunitz trypsin inhibitor 2 (215 aa).

Residues 1–23 form the signal peptide; the sequence is MKNPSVISFLIILLFAATICTHG. A disulfide bridge links C67 with C114. Residue N145 is glycosylated (N-linked (GlcNAc...) asparagine).

It belongs to the protease inhibitor I3 (leguminous Kunitz-type inhibitor) family. As to quaternary structure, interacts with RD21A. Interacts with RD21B and RD21C. Expressed in vascular bundles of the carpels, the transmitting tract of the style and septum epidermis. Expressed in etiolated seedlings.

The protein localises to the secreted. Its subcellular location is the cell wall. It localises to the extracellular space. The protein resides in the apoplast. It is found in the endoplasmic reticulum. Water-soluble and chlorophyll-binding protein that probably does not function as a chloroplast chlorophyll carrier and is not involved in photosynthesis. Involved in the control of cell death in the transmitting tract and septum epidermis during flower development. Binds and inhibits the activity of the cysteine protease RD21A as a pro-death protein. May play a role in herbivore resistance activation during seedling greening. In Arabidopsis thaliana (Mouse-ear cress), this protein is Kunitz trypsin inhibitor 2.